The sequence spans 1598 residues: Serine/threonine-protein kinase Nek1 (1598 aa).

The Protein kinase domain maps to 106 to 380; sequence YEVIRQIGAG…ALQCLGYTIF (275 aa). Residues 112–120 and K135 contribute to the ATP site; that span reads IGAGRFGEV. D240 acts as the Proton acceptor in catalysis.

It belongs to the protein kinase superfamily. NEK Ser/Thr protein kinase family. NIMA subfamily.

It is found in the cytoplasm. The protein localises to the cytoskeleton. Its subcellular location is the microtubule organizing center. The protein resides in the centrosome. It localises to the spindle pole. It catalyses the reaction L-seryl-[protein] + ATP = O-phospho-L-seryl-[protein] + ADP + H(+). It carries out the reaction L-threonyl-[protein] + ATP = O-phospho-L-threonyl-[protein] + ADP + H(+). With respect to regulation, phosphorylation status of the T-loop (amino acids 267-293) modulates kinase activity and subcellular localization of the protein. Functionally, probable serine/threonine-protein kinase. Involved in controlling centrosome splitting. Promotes separation of the centrosome outer cores. The chain is Serine/threonine-protein kinase Nek1 from Toxoplasma gondii (strain ATCC 50611 / Me49).